Consider the following 380-residue polypeptide: Protein arginine N-methyltransferase PRMT10 (380 aa).

The region spanning 26–357 (EVDFANYFCT…KENHRLMDME (332 aa)) is the SAM-dependent MTase PRMT-type domain. Positions 42, 51, 75, 97, and 126 each coordinate S-adenosyl-L-methionine. Residues Glu-140 and Glu-149 contribute to the active site. Residues 187-227 (ENKMEDLEIAMHDWNLFVEDTESYYGVNMNVLTKAYRAEHE) are dimerization arm.

The protein belongs to the class I-like SAM-binding methyltransferase superfamily. Protein arginine N-methyltransferase family. Ring-like homodimer.

The enzyme catalyses L-arginyl-[protein] + 2 S-adenosyl-L-methionine = N(omega),N(omega)-dimethyl-L-arginyl-[protein] + 2 S-adenosyl-L-homocysteine + 2 H(+). Its function is as follows. Methylates (mono and asymmetric dimethylation) the guanidino nitrogens of arginyl residues in some proteins. The chain is Protein arginine N-methyltransferase PRMT10 (PRMT10) from Oryza sativa subsp. japonica (Rice).